The following is a 57-amino-acid chain: Protein translocase subunit SecE (57 aa).

A helical transmembrane segment spans residues alanine 34–valine 54.

This sequence belongs to the SecE/SEC61-gamma family. In terms of assembly, component of the Sec protein translocase complex. Heterotrimer consisting of SecY (alpha), SecG (beta) and SecE (gamma) subunits. The heterotrimers can form oligomers, although 1 heterotrimer is thought to be able to translocate proteins. Interacts with the ribosome. May interact with SecDF, and other proteins may be involved.

The protein localises to the cell membrane. In terms of biological role, essential subunit of the Sec protein translocation channel SecYEG. Clamps together the 2 halves of SecY. May contact the channel plug during translocation. The sequence is that of Protein translocase subunit SecE from Halobacterium salinarum (strain ATCC 29341 / DSM 671 / R1).